The following is a 151-amino-acid chain: Neuroglobin (151 aa).

In terms of domain architecture, Globin spans 1-149 (MERPEHELIR…VVQAMSRGWN (149 aa)). Heme b is bound by residues H64 and H96.

It belongs to the globin family. Monomer. Homodimer and homotetramer; disulfide-linked. Mainly monomeric but also detected as part of homodimers and homotetramers. Interacts with 14-3-3 proteins; regulates the phosphorylation of NGB. Could interact (ferrous form) with G-alpha(i) proteins (GTP-bound form). Post-translationally, phosphorylated during hypoxia by ERK1/ERK2. Phosphorylation regulates the heme pocket hexacoordination preventing the association of His-64 with the heme metal center. Thereby, promotes the access of dioxygen and nitrite to the heme and stimulates the nitrite reductase activity. Phosphorylation during hypoxia is stabilized by 14-3-3 proteins.

It is found in the cytoplasm. Its subcellular location is the cytosol. The protein localises to the mitochondrion matrix. It catalyses the reaction Fe(III)-heme b-[protein] + nitric oxide + H2O = Fe(II)-heme b-[protein] + nitrite + 2 H(+). Its function is as follows. Monomeric globin with a bis-histidyl six-coordinate heme-iron atom through which it can bind dioxygen, carbon monoxide and nitric oxide. Could help transport oxygen and increase its availability to the metabolically active neuronal tissues, though its low quantity in tissues as well as its high affinity for dioxygen, which may limit its oxygen-releasing ability, argue against it. The ferrous/deoxygenated form exhibits a nitrite reductase activity and it could produce nitric oxide which in turn inhibits cellular respiration in response to hypoxia. In its ferrous/deoxygenated state, it may also exhibit GDI (Guanine nucleotide Dissociation Inhibitor) activity toward heterotrimeric G-alpha proteins, thereby regulating signal transduction to facilitate neuroprotective responses in the wake of hypoxia and associated oxidative stress. In Sus scrofa (Pig), this protein is Neuroglobin.